The sequence spans 358 residues: Insulin gene enhancer protein ISL-2A (358 aa).

2 consecutive LIM zinc-binding domains span residues 27-80 (CVGC…CKRD) and 89-143 (CANC…RADH). Positions 190–249 (TTRVRTVLNEKQLHTLRTCYNANPRPDALMKEQLVEMTGLSPRVIRVWFQNKRCKDKKRS) form a DNA-binding region, homeobox. Positions 325-335 (ESGSMGNSSGS) are enriched in low complexity. The tract at residues 325-358 (ESGSMGNSSGSDVTSLSSQLPDTPNSMVASPVDT) is disordered. The span at 336–358 (DVTSLSSQLPDTPNSMVASPVDT) shows a compositional bias: polar residues.

The protein resides in the nucleus. Functionally, binds to one of the cis-acting domain of the insulin gene enhancer. May be involved in subtype specialization of primary motoneurons. The polypeptide is Insulin gene enhancer protein ISL-2A (isl2a) (Oncorhynchus tshawytscha (Chinook salmon)).